The sequence spans 982 residues: Glutamate [NMDA] receptor subunit 1 (982 aa).

The first 16 residues, 1 to 16, serve as a signal peptide directing secretion; that stretch reads MAFAVWFLSTFVIVAA. Over 17 to 561 the chain is Extracellular; it reads QRHMALEHEG…TLVSFLQPFS (545 aa). 7 N-linked (GlcNAc...) asparagine glycosylation sites follow: asparagine 247, asparagine 303, asparagine 334, asparagine 386, asparagine 443, asparagine 470, and asparagine 490. Residues 518–520 and arginine 525 contribute to the glycine site; that span reads PLT. The helical transmembrane segment at 562-582 threads the bilayer; sequence NTLWILVMVSVHVVALVLYLL. Over 583–639 the chain is Cytoplasmic; sequence DRFSPFGRFKLSHSDSNEEKALNLSSAVWFAWGVLLNSGIGEGTPRSFSARVLGMVW. A helical transmembrane segment spans residues 640 to 660; sequence AGFAMIIVASYTANLAAFLVL. Residues 661–819 lie on the Extracellular side of the membrane; that stretch reads ERPKTKLSGI…KTPNTLGLKN (159 aa). N-linked (GlcNAc...) asparagine glycosylation is present at asparagine 681. Glycine-binding residues include serine 691 and aspartate 735. The helical transmembrane segment at 820 to 840 threads the bilayer; it reads MAGVFILVGVGIAGGVGLIII. The Cytoplasmic segment spans residues 841 to 982; the sequence is EVIYKKHQVK…YTSDVSHLVV (142 aa). Positions 934–982 are disordered; sequence EIGKPGQSPKVIGGPPHPMLGKTRPQAQQNLLPPRYSPGYTSDVSHLVV. Positions 972–982 are enriched in polar residues; the sequence is GYTSDVSHLVV.

Belongs to the glutamate-gated ion channel (TC 1.A.10.1) family. As to quaternary structure, forms a heteromeric NMDA channel with Nmdar2.

The protein localises to the cell membrane. Its subcellular location is the postsynaptic cell membrane. The protein resides in the postsynaptic density. Functionally, NMDA receptor subtype of glutamate-gated ion channels with high calcium permeability and voltage-dependent sensitivity to magnesium. Mediated by glycine. This protein plays a key role in synaptic plasticity, synaptogenesis, excitotoxicity, memory acquisition and learning. It mediates neuronal functions in glutamate neurotransmission. Is involved in the cell surface targeting of NMDA receptors. Plays a role in associative learning and in long-term memory consolidation. The protein is Glutamate [NMDA] receptor subunit 1 of Drosophila willistoni (Fruit fly).